The following is a 440-amino-acid chain: tRNA-2-methylthio-N(6)-dimethylallyladenosine synthase (440 aa).

Residues 4-120 form the MTTase N-terminal domain; the sequence is NYVYIETFGC…LNDMVLAAER (117 aa). Residues C13, C49, C83, C158, C162, and C165 each contribute to the [4Fe-4S] cluster site. The region spanning 144-374 is the Radical SAM core domain; it reads GTARISSFVT…QALQKRTTME (231 aa). Residues 377-439 form the TRAM domain; it reads DVLLGTRQTV…QNSLLGELLP (63 aa).

The protein belongs to the methylthiotransferase family. MiaB subfamily. Monomer. It depends on [4Fe-4S] cluster as a cofactor.

Its subcellular location is the cytoplasm. It catalyses the reaction N(6)-dimethylallyladenosine(37) in tRNA + (sulfur carrier)-SH + AH2 + 2 S-adenosyl-L-methionine = 2-methylsulfanyl-N(6)-dimethylallyladenosine(37) in tRNA + (sulfur carrier)-H + 5'-deoxyadenosine + L-methionine + A + S-adenosyl-L-homocysteine + 2 H(+). Its function is as follows. Catalyzes the methylthiolation of N6-(dimethylallyl)adenosine (i(6)A), leading to the formation of 2-methylthio-N6-(dimethylallyl)adenosine (ms(2)i(6)A) at position 37 in tRNAs that read codons beginning with uridine. In Pelobacter propionicus (strain DSM 2379 / NBRC 103807 / OttBd1), this protein is tRNA-2-methylthio-N(6)-dimethylallyladenosine synthase.